Here is a 160-residue protein sequence, read N- to C-terminus: Cytochrome b6-f complex subunit 4 (160 aa).

Helical transmembrane passes span Leu-36 to Val-56, Leu-95 to Glu-115, and Ala-131 to Ile-151.

Belongs to the cytochrome b family. PetD subfamily. As to quaternary structure, the 4 large subunits of the cytochrome b6-f complex are cytochrome b6, subunit IV (17 kDa polypeptide, petD), cytochrome f and the Rieske protein, while the 4 small subunits are petG, petL, petM and petN. The complex functions as a dimer.

Its subcellular location is the plastid. The protein resides in the chloroplast thylakoid membrane. Component of the cytochrome b6-f complex, which mediates electron transfer between photosystem II (PSII) and photosystem I (PSI), cyclic electron flow around PSI, and state transitions. This is Cytochrome b6-f complex subunit 4 from Bigelowiella natans (Pedinomonas minutissima).